A 404-amino-acid polypeptide reads, in one-letter code: Glucose-1-phosphate adenylyltransferase (404 aa).

Alpha-D-glucose 1-phosphate is bound by residues tyrosine 99, glycine 164, 179-180 (EK), and serine 197.

This sequence belongs to the bacterial/plant glucose-1-phosphate adenylyltransferase family.

It carries out the reaction alpha-D-glucose 1-phosphate + ATP + H(+) = ADP-alpha-D-glucose + diphosphate. The protein operates within glycan biosynthesis; glycogen biosynthesis. Its function is as follows. Involved in the biosynthesis of ADP-glucose, a building block, required in the biosynthesis of maltose-1-phosphate (M1P) and in the elongation reactions to produce linear alpha-1,4-glucans. Catalyzes the reaction between ATP and alpha-D-glucose 1-phosphate (G1P) to produce pyrophosphate and ADP-Glc. The polypeptide is Glucose-1-phosphate adenylyltransferase (Mycolicibacterium vanbaalenii (strain DSM 7251 / JCM 13017 / BCRC 16820 / KCTC 9966 / NRRL B-24157 / PYR-1) (Mycobacterium vanbaalenii)).